The primary structure comprises 118 residues: Putative pterin-4-alpha-carbinolamine dehydratase (118 aa).

It belongs to the pterin-4-alpha-carbinolamine dehydratase family.

It carries out the reaction (4aS,6R)-4a-hydroxy-L-erythro-5,6,7,8-tetrahydrobiopterin = (6R)-L-erythro-6,7-dihydrobiopterin + H2O. The polypeptide is Putative pterin-4-alpha-carbinolamine dehydratase (Pseudomonas aeruginosa (strain LESB58)).